We begin with the raw amino-acid sequence, 103 residues long: Small ribosomal subunit protein uS10 (103 aa).

The protein belongs to the universal ribosomal protein uS10 family. As to quaternary structure, part of the 30S ribosomal subunit.

Functionally, involved in the binding of tRNA to the ribosomes. In Escherichia coli O127:H6 (strain E2348/69 / EPEC), this protein is Small ribosomal subunit protein uS10.